The following is a 387-amino-acid chain: Phosphoglycerate kinase (387 aa).

Substrate contacts are provided by residues 21-23, Arg36, 59-62, Arg113, and Arg146; these read DLN and HLGR. ATP-binding positions include Lys197, Glu314, and 340–343; that span reads GGDT.

This sequence belongs to the phosphoglycerate kinase family. In terms of assembly, monomer.

Its subcellular location is the cytoplasm. The catalysed reaction is (2R)-3-phosphoglycerate + ATP = (2R)-3-phospho-glyceroyl phosphate + ADP. It functions in the pathway carbohydrate degradation; glycolysis; pyruvate from D-glyceraldehyde 3-phosphate: step 2/5. This Pseudomonas aeruginosa (strain ATCC 15692 / DSM 22644 / CIP 104116 / JCM 14847 / LMG 12228 / 1C / PRS 101 / PAO1) protein is Phosphoglycerate kinase.